Reading from the N-terminus, the 198-residue chain is Superoxide dismutase [Fe] (198 aa).

Residues His-27, His-74, Asp-157, and His-161 each coordinate Fe cation.

It belongs to the iron/manganese superoxide dismutase family. In terms of assembly, homodimer. The cofactor is Fe cation.

It carries out the reaction 2 superoxide + 2 H(+) = H2O2 + O2. In terms of biological role, destroys superoxide anion radicals which are normally produced within the cells and which are toxic to biological systems. This is Superoxide dismutase [Fe] (sodB) from Pseudomonas putida (strain ATCC 47054 / DSM 6125 / CFBP 8728 / NCIMB 11950 / KT2440).